The primary structure comprises 82 residues: Cell division topological specificity factor (82 aa).

It belongs to the MinE family.

In terms of biological role, prevents the cell division inhibition by proteins MinC and MinD at internal division sites while permitting inhibition at polar sites. This ensures cell division at the proper site by restricting the formation of a division septum at the midpoint of the long axis of the cell. This chain is Cell division topological specificity factor, found in Hahella chejuensis (strain KCTC 2396).